Here is a 118-residue protein sequence, read N- to C-terminus: MARIAGVNIPDNKHAVISLTYIFGVGRTTAQKILEAVGIAPSTKVSQLDDTQLDAIRAQVSEYMTEGDLRREVSMNIKRLVDLGCYRGIRHRRNLPVRGQNTKNNARTRKGPTRPLKR.

Residues 92-118 form a disordered region; the sequence is RRNLPVRGQNTKNNARTRKGPTRPLKR. Positions 106 to 118 are enriched in basic residues; sequence ARTRKGPTRPLKR.

It belongs to the universal ribosomal protein uS13 family. Part of the 30S ribosomal subunit. Forms a loose heterodimer with protein S19. Forms two bridges to the 50S subunit in the 70S ribosome.

Functionally, located at the top of the head of the 30S subunit, it contacts several helices of the 16S rRNA. In the 70S ribosome it contacts the 23S rRNA (bridge B1a) and protein L5 of the 50S subunit (bridge B1b), connecting the 2 subunits; these bridges are implicated in subunit movement. Contacts the tRNAs in the A and P-sites. In Psychrobacter arcticus (strain DSM 17307 / VKM B-2377 / 273-4), this protein is Small ribosomal subunit protein uS13.